Consider the following 658-residue polypeptide: Threonine--tRNA ligase (658 aa).

The region spanning 1–64 (MSFSISLSFP…EQSGQVEIIT (64 aa)) is the TGS domain. The segment at 246-549 (DHRRLGREMD…LIENFAGHMP (304 aa)) is catalytic. Zn(2+)-binding residues include Cys343, His394, and His526.

It belongs to the class-II aminoacyl-tRNA synthetase family. Homodimer. The cofactor is Zn(2+).

The protein resides in the cytoplasm. It catalyses the reaction tRNA(Thr) + L-threonine + ATP = L-threonyl-tRNA(Thr) + AMP + diphosphate + H(+). In terms of biological role, catalyzes the attachment of threonine to tRNA(Thr) in a two-step reaction: L-threonine is first activated by ATP to form Thr-AMP and then transferred to the acceptor end of tRNA(Thr). Also edits incorrectly charged L-seryl-tRNA(Thr). The sequence is that of Threonine--tRNA ligase from Bartonella bacilliformis (strain ATCC 35685 / KC583 / Herrer 020/F12,63).